A 453-amino-acid polypeptide reads, in one-letter code: Serine/threonine-protein phosphatase 2A regulatory subunit B'' subunit gamma (453 aa).

EF-hand domains are found at residues 273–308 (PSAL…TMTN) and 341–376 (KEPA…IQEL). The Ca(2+) site is built by Asp-286, Asp-288, Asn-290, Met-292, and Glu-297.

As to quaternary structure, interacts with MCM3AP/GANP, PPP5C, and the phosphatase 2A core enzyme composed of the PPP2CA catalytic subunit and the constant regulatory subunit PPP2R1A. Finds in a complex with ABCB1, TFPI2 and PPP2R3C; leading to the dephosphorylation of ABCB1.

The protein resides in the nucleus. The protein localises to the cytoplasm. May regulate MCM3AP phosphorylation through phosphatase recruitment. May act as a negative regulator of ABCB1 expression and function through the dephosphorylation of ABCB1 by TFPI2/PPP2R3C complex. May play a role in the activation-induced cell death of B-cells. In Bos taurus (Bovine), this protein is Serine/threonine-protein phosphatase 2A regulatory subunit B'' subunit gamma (PPP2R3C).